The primary structure comprises 572 residues: Oxygen-dependent choline dehydrogenase (572 aa).

9-38 (DYVIIGGGSAGSVLGARLSEDKDKNVLVLE) is a binding site for FAD. The active-site Proton acceptor is the His477.

The protein belongs to the GMC oxidoreductase family. The cofactor is FAD.

The enzyme catalyses choline + A = betaine aldehyde + AH2. It carries out the reaction betaine aldehyde + NAD(+) + H2O = glycine betaine + NADH + 2 H(+). It functions in the pathway amine and polyamine biosynthesis; betaine biosynthesis via choline pathway; betaine aldehyde from choline (cytochrome c reductase route): step 1/1. Its function is as follows. Involved in the biosynthesis of the osmoprotectant glycine betaine. Catalyzes the oxidation of choline to betaine aldehyde and betaine aldehyde to glycine betaine at the same rate. This Staphylococcus epidermidis (strain ATCC 35984 / DSM 28319 / BCRC 17069 / CCUG 31568 / BM 3577 / RP62A) protein is Oxygen-dependent choline dehydrogenase.